Reading from the N-terminus, the 224-residue chain is Cytidylate kinase (224 aa).

11–19 (GPAGAGKST) lines the ATP pocket.

It belongs to the cytidylate kinase family. Type 1 subfamily.

The protein resides in the cytoplasm. It carries out the reaction CMP + ATP = CDP + ADP. It catalyses the reaction dCMP + ATP = dCDP + ADP. The polypeptide is Cytidylate kinase (Exiguobacterium sp. (strain ATCC BAA-1283 / AT1b)).